The following is a 264-amino-acid chain: Apolipoprotein A-I (264 aa).

The N-terminal stretch at 1–18 is a signal peptide; that stretch reads MKAVVLAVAVLFLTGSQA. 2 consecutive repeat copies span residues 67 to 88 and 89 to 110. Residues 67–264 form a 10 X approximate tandem repeats region; sequence LKLVDNWDTV…DETSKRLSTQ (198 aa). M109 carries the post-translational modification Methionine sulfoxide. A 3; half-length repeat occupies 111 to 121; sequence KDLEEVKKQVQ. Tandem repeats lie at residues 122-143, 144-165, and 166-187. One copy of the 7; truncated repeat lies at 188 to 207; sequence PYSDKMRERLAQHLAKLKDS. M193 bears the Methionine sulfoxide mark. The stretch at 208–229 is repeat 8; the sequence is TTLAEYRTKASNHLQTLSEKAK. The stretch at 230–240 is one 9; half-length repeat; the sequence is PALEDLRQGLT. Residues 241-264 form repeat 10; it reads PMLESFRATIMGWIDETSKRLSTQ. M242 carries the methionine sulfoxide modification.

Belongs to the apolipoprotein A1/A4/E family. As to quaternary structure, homodimer. Interacts with APOA1BP and CLU. Component of a sperm activating protein complex (SPAP), consisting of APOA1, an immunoglobulin heavy chain, an immunoglobulin light chain and albumin. Interacts with NDRG1. Interacts with SCGB3A2. Interacts with NAXE and YJEFN3. Glycosylated. In terms of processing, palmitoylated. Post-translationally, phosphorylation sites are present in the extracellular medium.

The protein resides in the secreted. In terms of biological role, participates in the reverse transport of cholesterol from tissues to the liver for excretion by promoting cholesterol efflux from tissues and by acting as a cofactor for the lecithin cholesterol acyltransferase (LCAT). As part of the SPAP complex, activates spermatozoa motility. This is Apolipoprotein A-I (Apoa1) from Peromyscus maniculatus bairdii (Prairie deer mouse).